A 131-amino-acid chain; its full sequence is Proteinase inhibitor (131 aa).

The N-terminal stretch at 1–26 is a signal peptide; it reads MSASAKLSRMVCLLCGFFSTGISMAS. A disulfide bridge connects residues Cys-51 and Cys-74.

The protein belongs to the protease inhibitor I38 family.

The protein localises to the periplasm. Inhibitor of the alkaline protease. It forms a non-covalent bond with the protease and may prevent its autocatalytic cleavage in the periplasm. The polypeptide is Proteinase inhibitor (inh) (Pseudomonas aeruginosa (strain ATCC 15692 / DSM 22644 / CIP 104116 / JCM 14847 / LMG 12228 / 1C / PRS 101 / PAO1)).